We begin with the raw amino-acid sequence, 216 residues long: GTPase IMAP family member GIMD1 (216 aa).

In terms of domain architecture, AIG1-type G spans 5 to 216; it reads KMTINLALFG…ENCYQVLTFK (212 aa). Residues 14-22, Ser-35, and 147-149 contribute to the GTP site; these read GMTQSGKSS and HAE.

This sequence belongs to the TRAFAC class TrmE-Era-EngA-EngB-Septin-like GTPase superfamily. AIG1/Toc34/Toc159-like paraseptin GTPase family. IAN subfamily.

This is GTPase IMAP family member GIMD1 (GIMD1) from Bos taurus (Bovine).